Consider the following 527-residue polypeptide: GMP synthase [glutamine-hydrolyzing] (527 aa).

Residues 19-212 (KIIVLDYGSQ…AFSICGAKGD (194 aa)) form the Glutamine amidotransferase type-1 domain. Catalysis depends on Cys-96, which acts as the Nucleophile. Catalysis depends on residues His-186 and Glu-188. Residues 213–402 (WSMANFVDMQ…LGMPDEVVWR (190 aa)) enclose the GMPS ATP-PPase domain. 240 to 246 (SGGVDSS) contacts ATP.

Homodimer.

It carries out the reaction XMP + L-glutamine + ATP + H2O = GMP + L-glutamate + AMP + diphosphate + 2 H(+). Its pathway is purine metabolism; GMP biosynthesis; GMP from XMP (L-Gln route): step 1/1. Catalyzes the synthesis of GMP from XMP. This Streptococcus thermophilus (strain ATCC BAA-250 / LMG 18311) protein is GMP synthase [glutamine-hydrolyzing].